A 502-amino-acid polypeptide reads, in one-letter code: MTAVTSDGTPQAAKVRVRFCPSPTGVPHVGMVRTALFNWAYARHTGGTFVLRIEDTDADRDSEESYLALLDALRWLGLNWDEGPEVGGPYGPYRQSQRTDIYREVVAKLLATGEAYYAFSTPEEVENRHLAAGRNPKLGYDNFDRDLTDAQFSAYLAEGRKPVVRLRMPDEDISWDDLVRGTTTFAVGTVPDYVLTRASGDPLYTLVNPCDDALMKITHVLRGEDLLSSTPRQVALYQALIRIGMAERIPEFGHFPSVLGEGTKKLSKREPQSNLFAHRDRGFIPEGLLNYLALLGWAIADDHDLFSLDEMVAAFDVVDVNSNPARFDQKKADAVNAEHIRMLDSEDFAGRLRDYFTTHGYHIALDPANYEAGFVAAAQLVQTRIVVLGDAWDLLKFLNDDEYSIDSKAAAKELDADAGPVLDVACAVLDSLVDWTTASIEDVLKVALIEGLGLKPRKVFGPIRVAATGALVSPPLFESLELLGRARSLQRLSAARARVTSA.

Positions 21 to 31 (PSPTGVPHVGM) match the 'HIGH' region motif. The short motif at 265 to 269 (KLSKR) is the 'KMSKS' region element. Position 268 (K268) interacts with ATP.

Belongs to the class-I aminoacyl-tRNA synthetase family. Glutamate--tRNA ligase type 1 subfamily. In terms of assembly, monomer.

The protein resides in the cytoplasm. It carries out the reaction tRNA(Glu) + L-glutamate + ATP = L-glutamyl-tRNA(Glu) + AMP + diphosphate. In terms of biological role, catalyzes the attachment of glutamate to tRNA(Glu) in a two-step reaction: glutamate is first activated by ATP to form Glu-AMP and then transferred to the acceptor end of tRNA(Glu). This is Glutamate--tRNA ligase from Mycobacterium leprae (strain TN).